The chain runs to 450 residues: Beclin-1 (450 aa).

Met-1 is subject to N-acetylmethionine. A phosphoserine mark is found at Ser-15 and Ser-30. The disordered stretch occupies residues Thr-48–Thr-72. Ser-90, Ser-93, and Ser-96 each carry phosphoserine; by AMPK. The BH3 motif lies at Thr-108–Ser-127. The interaction with BCL2 and BCL2L1 isoform Bcl-X(L) stretch occupies residues Leu-112–Cys-159. Phosphothreonine; by DAPK1 is present on Thr-119. A coiled-coil region spans residues Asp-142–Phe-270. The interval Asp-245–Lys-450 is evolutionary conserved domain (ECD). Glycyl lysine isopeptide (Lys-Gly) (interchain with G-Cter in ubiquitin) cross-links involve residues Lys-402 and Lys-437. The interval Trp-425–Lys-450 is required for membrane-association.

The protein belongs to the beclin family. In terms of assembly, a homodimeric form is proposed to exist; this metastable form readily transits to ATG14- or UVRAG-containing complexes with BECN1:UVRAG being more stable than BECN1:ATG14. Component of the PI3K (PI3KC3/PI3K-III/class III phosphatidylinositol 3-kinase) complex the core of which is composed of the catalytic subunit PIK3C3, the regulatory subunit PIK3R4 and BECN1 associating with additional regulatory/auxiliary subunits to form alternative complex forms. Alternative complex forms containing a fourth regulatory subunit in a mutually exclusive manner are PI3K complex I (PI3KC3-C1) containing ATG14, and PI3K complex II (PI3KC3-C2) containing UVRAG. PI3KC3-C1 displays a V-shaped architecture with PIK3R4 serving as a bridge between PIK3C3 and the ATG14:BECN1 subcomplex. Both, PI3KC3-C1 and PI3KC3-C2, can associate with further regulatory subunits, such as RUBCN, SH3GLB1/Bif-1 and AMBRA1. PI3KC3-C1 probably associates with PIK3CB. Forms a complex with PPP2CA and AMBRA1; AMBRA1 and BECN1 components of the complex regulate MYC stability via different pathways. Component of the complex, at least composed of LRPPRC, BECN1 and BCL2; the interactions prevent BECN1 from forming an autophagy-inducing complex with PIK3C3. Interacts with AMBRA1, GOPC, GRID2. Interacts with BCL2 and BCL2L1 isoform Bcl-X(L); the interaction inhibits BECN1 function in promoting autophagy by interfering with the formation of the PI3K complex. Interacts with cytosolic HMGB1; inhibits the interaction of BECN1 and BCL2 leading to promotion of autophagy. Interacts with USP10, USP13, VMP1, DAPK1, RAB39A. Interacts with the poly-Gln domain of ATXN3; the interaction causes deubiquitination at Lys-402 and stabilizes BECN1. Interacts with SLAMF1. Interacts with TRIM5; the interaction causes activation of BECN1 by causing its dissociation from its inhibitors BCL2 and TAB2. Interacts with active ULK1 (phosphorylated on 'Ser-317') and MEFV simultaneously. Interacts with WDR81 and WDR91; negatively regulates the PI3 kinase/PI3K activity associated with endosomal membranes. Interacts with LAPTM4B; competes with EGFR for LAPTM4B binding; regulates EGFR activity. Interacts with TRIM50. Interacts with TRIM16. Interacts with ATG14; this interaction is increased in the absence of TMEM39A. Interacts with WASHC1; preventing interaction with AMBRA1 and the DCX(AMBRA1) complex and subsequent ubiquitination. Interacts with TRIM17. Interacts with BCL2L10/BCL-B (via BH1 domain). Interacts with SH3BGRL. Interacts with IRGM; enhancing BECN1-interacting partners and influencing the composition of the BECN1 complex. Interacts with ARMC3. Interacts with LRPPRC. (Microbial infection) Interacts with human cytomegalovirus/HHV-5 protein TRS1. As to quaternary structure, (Microbial infection) Interacts with murine gammaherpesvirus 68 M11. In terms of assembly, (Microbial infection) Interacts with herpes simplex virus 1 (HHV-1) protein ICP34.5; this interaction antagonizes the host autophagy response. (Microbial infection) Interacts with Epstein-Barr virus protein BHRF1; this interaction inhibits BECN1-mediated autophagy induction. Phosphorylation at Thr-119 by DAPK1 reduces its interaction with BCL2 and BCL2L1 and promotes induction of autophagy. In response to autophagic stimuli, phosphorylated at serine residues by AMPK in an ATG14-dependent manner, and this phosphorylation is critical for maximally efficient autophagy. In terms of processing, polyubiquitinated by NEDD4, both with 'Lys-11'- and 'Lys-63'-linkages. 'Lys-11'-linked polyubiquitination leads to degradation and is enhanced when the stabilizing interaction partner VPS34 is depleted. Deubiquitinated by USP10 and USP13, leading to stabilize the PIK3C3/VPS34-containing complexes. Polyubiquitinated at Lys-402 with 'Lys-48'-linkages. 'Lys-48'-linked polyubiquitination of Lys-402 leads to degradation. Deubiquitinated by ATXN3, leading to stabilization. Ubiquitinated at Lys-437 via 'Lys-63'-linkage by the DCX(AMBRA1) complex, thereby increasing the association between BECN1 and PIK3C3 to promote PIK3C3 activity. 'Lys-48'-linked ubiquitination by RNF216 leads to proteasomal degradation and autophagy inhibition. Post-translationally, proteolytically processed by caspases including CASP8 and CASP3; the C-terminal fragments lack autophagy-inducing capacity and are proposed to induce apoptosis. Thus the cleavage is proposed to be an determinant to switch from autophagy to apoptosis pathways affecting cellular homeostasis including viral infections and survival of tumor cells. In terms of tissue distribution, ubiquitous.

The protein resides in the cytoplasm. Its subcellular location is the golgi apparatus. The protein localises to the trans-Golgi network membrane. It localises to the endosome membrane. It is found in the endoplasmic reticulum membrane. The protein resides in the mitochondrion membrane. Its subcellular location is the endosome. The protein localises to the cytoplasmic vesicle. It localises to the autophagosome. It is found in the mitochondrion. The protein resides in the nucleus. Functionally, plays a central role in autophagy. Acts as a core subunit of the PI3K complex that mediates formation of phosphatidylinositol 3-phosphate; different complex forms are believed to play a role in multiple membrane trafficking pathways: PI3KC3-C1 is involved in initiation of autophagosomes and PI3KC3-C2 in maturation of autophagosomes and endocytosis. Involved in regulation of degradative endocytic trafficking and required for the abscission step in cytokinesis, probably in the context of PI3KC3-C2. Essential for the formation of PI3KC3-C2 but not PI3KC3-C1 PI3K complex forms. Involved in endocytosis. May play a role in antiviral host defense. Its function is as follows. Beclin-1-C 35 kDa localized to mitochondria can promote apoptosis; it induces the mitochondrial translocation of BAX and the release of proapoptotic factors. In terms of biological role, (Microbial infection) Protects against infection by a neurovirulent strain of Sindbis virus. The chain is Beclin-1 (BECN1) from Homo sapiens (Human).